A 1477-amino-acid chain; its full sequence is Lysine-specific demethylase rbr-2 (1477 aa).

The tract at residues 1 to 37 (MRARRQENSISTPSAPSTSTSPRKKASIGNSRSKNHG) is disordered. The span at 9–21 (SISTPSAPSTSTS) shows a compositional bias: low complexity. In terms of domain architecture, JmjN spans 56–97 (APIYYPTEEEFSDPIEYVAKIRHEAEKFGVVKIVPPANFKPP). The ARID domain occupies 121–218 (VKEKHTFIDR…HIEPFNRNLK (98 aa)). The interval 222–314 (MKNDDESDDE…KAEGDDDDDE (93 aa)) is disordered. The span at 246 to 259 (MRTEIEVPNDKTTE) shows a compositional bias: basic and acidic residues. 2 stretches are compositionally biased toward basic residues: residues 272-283 (GRRRSKNKKASS) and 295-304 (NSTRGRKNKK). The PHD-type 1 zinc-finger motif lies at 319–371 (QVFCVACNEGKDEDLLLLCDIDGCNNGRHTYCCDPVLDEVPEGEWRCPKCIES). The 167-residue stretch at 468–634 (QYASHAWNLN…KGRECVESYS (167 aa)) folds into the JmjC domain. Positions 514, 517, and 602 each coordinate Fe cation. A coiled-coil region spans residues 874–926 (IIDKLEKWMEQVEMWRNRAKDAIYREQEYSKEEIEKIIEEGDEYDIKLEEIDE). A PHD-type 2 zinc finger spans residues 1203–1257 (LEACSCLGFNKSDDSESTLTCIMCDSEFHVRCCEWSPFLEKLPEGCFLCVRCLRG). The disordered stretch occupies residues 1375-1404 (TAKRKRPSVSHKETSKKSRKRQSQASPSEY). A PHD-type 3 zinc finger spans residues 1411–1466 (FKSCQARACLKPYGDSVNWVMCEAGCKNWFHVICLGFTLREINDMHEYRCSSCLDH).

It belongs to the JARID1 histone demethylase family. Fe(2+) serves as cofactor.

The protein localises to the nucleus. The enzyme catalyses N(6),N(6),N(6)-trimethyl-L-lysyl(4)-[histone H3] + 3 2-oxoglutarate + 3 O2 = L-lysyl(4)-[histone H3] + 3 formaldehyde + 3 succinate + 3 CO2. Functionally, histone demethylase that specifically demethylates 'Lys-4' of histone H3, thereby playing a central role in histone code. Does not demethylate histone H3 'Lys-9', H3 'Lys-27', H3 'Lys-36', H3 'Lys-79' or H4 'Lys-20'. Demethylates trimethylated and dimethylated but not monomethylated H3 'Lys-4'. Required for normal longevity of the soma in a germline-dependent manner. Implicated in the epigenetic inheritance of lifespan over several generations. Involved in larval development and vulva formation. The protein is Lysine-specific demethylase rbr-2 (rbr-2) of Caenorhabditis elegans.